Consider the following 321-residue polypeptide: Methionyl-tRNA formyltransferase (321 aa).

111 to 114 (GLLP) contacts (6S)-5,6,7,8-tetrahydrofolate.

Belongs to the Fmt family.

It carries out the reaction L-methionyl-tRNA(fMet) + (6R)-10-formyltetrahydrofolate = N-formyl-L-methionyl-tRNA(fMet) + (6S)-5,6,7,8-tetrahydrofolate + H(+). Attaches a formyl group to the free amino group of methionyl-tRNA(fMet). The formyl group appears to play a dual role in the initiator identity of N-formylmethionyl-tRNA by promoting its recognition by IF2 and preventing the misappropriation of this tRNA by the elongation apparatus. The protein is Methionyl-tRNA formyltransferase of Chlamydia abortus (strain DSM 27085 / S26/3) (Chlamydophila abortus).